A 329-amino-acid chain; its full sequence is Serine/threonine-protein phosphatase PP1-alpha (329 aa).

The Mn(2+) site is built by Asp64, His66, Asp92, and Asn124. The active-site Proton donor is the His125. Mn(2+)-binding residues include His173 and His248. The disordered stretch occupies residues 309-329 (GMNSGRPAVGGGRPGTTAGKK).

It belongs to the PPP phosphatase family. PP-1 subfamily. In terms of assembly, interacts with lab-1; the interaction is direct. Interacts with knl-1; the interaction is direct. Requires Mn(2+) as cofactor.

It carries out the reaction O-phospho-L-seryl-[protein] + H2O = L-seryl-[protein] + phosphate. It catalyses the reaction O-phospho-L-threonyl-[protein] + H2O = L-threonyl-[protein] + phosphate. Its function is as follows. Serine/threonine-protein phosphatase which antagonizes the function of air-2 in the regulation of chromosome cohesion. Dephosphorylates histone H3 at 'Ser-10'. Dephosphorylates translation initiation factor eIF2alpha. Involved in the activation of chloride channel clh-3 during cell swelling and meiotic maturation. This Caenorhabditis briggsae protein is Serine/threonine-protein phosphatase PP1-alpha (gsp-1).